Here is a 1232-residue protein sequence, read N- to C-terminus: Protein transport protein sec-16A.1 (1232 aa).

Disordered regions lie at residues G18–A134, R172–E193, P815–D843, K866–E942, Q972–Q1069, and P1140–D1232. Polar residues predominate over residues D26 to S37. The segment covering R67–P76 has biased composition (low complexity). Positions S78–N100 are enriched in polar residues. The span at Q817–S836 shows a compositional bias: polar residues. The span at S896–T914 shows a compositional bias: low complexity. Polar residues-rich tracts occupy residues Q1046–T1060, S1149–S1159, and Y1168–A1178. The segment covering P1194 to P1203 has biased composition (low complexity). The segment covering P1222–D1232 has biased composition (polar residues).

Belongs to the SEC16 family. Interacts with tfg-1 (via N-terminus); the interaction is direct and is required for both the localization of tfg-1 and to maintain the distribution of sec-16A.1 at endoplasmic reticulum exit sites (ERES).

The protein resides in the endoplasmic reticulum. It is found in the endoplasmic reticulum-Golgi intermediate compartment. Plays a role in the organization of the endoplasmic reticulum exit sites (ERES), also known as transitional endoplasmic reticulum (tER). In association with tfg-1, accumulates at ERES to positively regulate secretory cargo trafficking from the endoplasmic reticulum to the endoplasmic reticulum-Golgi intermediate compartment (ERGIC) and Golgi apparatus. In Caenorhabditis elegans, this protein is Protein transport protein sec-16A.1.